Consider the following 448-residue polypeptide: Chromosomal replication initiator protein DnaA (448 aa).

Residues 1-73 (MNTHLTETWE…VNALKLLTSK (73 aa)) form a domain I, interacts with DnaA modulators region. Positions 73-109 (KKYNIDFIVTTEEKIEENQKNHNNEKSNIVVNDEMST) are domain II. Residues 110–326 (MLNPKYTFDS…GALIRIVAFS (217 aa)) are domain III, AAA+ region. ATP contacts are provided by Gly154, Gly156, Lys157, and Thr158. A domain IV, binds dsDNA region spans residues 327 to 448 (SLTNKEISID…KELNKRINQK (122 aa)).

The protein belongs to the DnaA family. In terms of assembly, oligomerizes as a right-handed, spiral filament on DNA at oriC.

Its subcellular location is the cytoplasm. Plays an essential role in the initiation and regulation of chromosomal replication. ATP-DnaA binds to the origin of replication (oriC) to initiate formation of the DNA replication initiation complex once per cell cycle. Binds the DnaA box (a 9 base pair repeat at the origin) and separates the double-stranded (ds)DNA. Forms a right-handed helical filament on oriC DNA; dsDNA binds to the exterior of the filament while single-stranded (ss)DNA is stabiized in the filament's interior. The ATP-DnaA-oriC complex binds and stabilizes one strand of the AT-rich DNA unwinding element (DUE), permitting loading of DNA polymerase. After initiation quickly degrades to an ADP-DnaA complex that is not apt for DNA replication. Binds acidic phospholipids. This is Chromosomal replication initiator protein DnaA from Clostridium botulinum (strain ATCC 19397 / Type A).